Reading from the N-terminus, the 190-residue chain is UPF0340 protein BT9727_4999 (190 aa).

Belongs to the UPF0340 family.

The polypeptide is UPF0340 protein BT9727_4999 (Bacillus thuringiensis subsp. konkukian (strain 97-27)).